A 106-amino-acid polypeptide reads, in one-letter code: Large ribosomal subunit protein uL24 (106 aa).

It belongs to the universal ribosomal protein uL24 family. Part of the 50S ribosomal subunit.

One of two assembly initiator proteins, it binds directly to the 5'-end of the 23S rRNA, where it nucleates assembly of the 50S subunit. Functionally, one of the proteins that surrounds the polypeptide exit tunnel on the outside of the subunit. This Acidovorax sp. (strain JS42) protein is Large ribosomal subunit protein uL24.